Consider the following 259-residue polypeptide: Indole-diterpene biosynthesis cluster protein S (259 aa).

The next 5 membrane-spanning stretches (helical) occupy residues 5–25 (EASG…GMVW), 64–84 (WFAL…AIIL), 87–107 (VYLI…LWVL), 134–154 (VLWF…AASF), and 221–241 (LGAG…PAAG).

The protein belongs to the ltmS family.

Its subcellular location is the membrane. Its function is as follows. Part of the gene cluster that mediates the biosynthesis of paspalitrems, indole-diterpene (IDT) mycotoxins that are potent tremorgens in mammals. The geranylgeranyl diphosphate (GGPP) synthase idtG is proposed to catalyze the first step in IDT biosynthesis via catalysis of a series of iterative condensations of isopentenyl diphosphate (IPP) with dimethylallyl diphosphate (DMAPP), geranyl diphosphate (GPP), and farnesyl diphosphate (FPP), to form GGPP. Condensation of indole-3-glycerol phosphate with GGPP by the prenyltransferase idtC then forms 3-geranylgeranylindole (3-GGI). Epoxidation of the two terminal alkenes of the geranylgeranyl moiety by the FAD-dependent monooxygenase idtM, and cyclization by the terpene cyclase idtB then leads to the production of paspaline. The cytochrome P450 monooxygenase idtP then catalyzes oxidative elimination of the pendant methyl group at C-12 of paspaline and generates the C-10 ketone to yield 13-desoxypaxilline. The cytochrome P450 monooxygenase idtQ may catalyze the C-13 oxidation of 13-desoxypaxilline to afford paxilline. Considering that both paspalicine and paxilline were detected in C.paspali, idtQ also catalyzes the formation of paspalinine from 13-desoxypaxilline via paspalicine as an intermediate. Finally, the alpha-prenyltransferase idtF prenylates paspalinine at the C-20 or the C-21 positions to yield paspalitrems A and C, respectively. The hydroxylation of paspalitrem A at C-32 by a still unknown oxidase affords paspalitrem B. The chain is Indole-diterpene biosynthesis cluster protein S from Claviceps paspali (Rye ergot fungus).